We begin with the raw amino-acid sequence, 20 residues long: GVIAWELQHNEPGRKDSTAG.

The disordered stretch occupies residues 1 to 20 (GVIAWELQHNEPGRKDSTAG). The segment covering 8–20 (QHNEPGRKDSTAG) has biased composition (basic and acidic residues).

This peptide stimulates the transport of dentinal fluid, which is important for the prevention of dental caries. This chain is Dentinal fluid transport-stimulating peptide, found in Rattus norvegicus (Rat).